Here is a 524-residue protein sequence, read N- to C-terminus: Probable 1,3-beta-glucanosyltransferase GAS3 (524 aa).

An N-terminal signal peptide occupies residues 1-21 (MQLSKSILLAALAATPSLVNA). A disulfide bridge connects residues Cys78 and Cys107. Tyr96, Asn168, and Glu169 together coordinate (1,3-beta-D-glucosyl)n. The Proton donor role is filled by Glu169. N-linked (GlcNAc...) asparagine glycosylation is present at Asn201. Residues Asp212 and Arg217 each contribute to the (1,3-beta-D-glucosyl)n site. Cystine bridges form between Cys226–Cys369 and Cys254–Cys286. Asn269 carries an N-linked (GlcNAc...) asparagine glycan. The Nucleophile role is filled by Glu283. Residue Tyr315 coordinates (1,3-beta-D-glucosyl)n. Residues Asn350, Asn385, Asn404, and Asn422 are each glycosylated (N-linked (GlcNAc...) asparagine). A disordered region spans residues 461-498 (TSQSSSRSLTSSTSPSSSTGSSSSTGSSSASSSSKSKG). Gly498 carries GPI-anchor amidated glycine lipidation. The propeptide at 499–524 (VGNIVNVSFSQSGYLALFAGLISALL) is removed in mature form.

This sequence belongs to the glycosyl hydrolase 72 family. The GPI-anchor is attached to the protein in the endoplasmic reticulum and serves to target the protein to the cell surface. There, the glucosamine-inositol phospholipid moiety is cleaved off and the GPI-modified mannoprotein is covalently attached via its lipidless GPI glycan remnant to the 1,6-beta-glucan of the outer cell wall layer. Post-translationally, N-glycosylated.

It is found in the secreted. Its subcellular location is the cell wall. The protein localises to the membrane. Splits internally a 1,3-beta-glucan molecule and transfers the newly generated reducing end (the donor) to the non-reducing end of another 1,3-beta-glucan molecule (the acceptor) forming a 1,3-beta linkage, resulting in the elongation of 1,3-beta-glucan chains in the cell wall. Involved in cell wall biosynthesis and morphogenesis. The sequence is that of Probable 1,3-beta-glucanosyltransferase GAS3 (GAS3) from Saccharomyces cerevisiae (strain ATCC 204508 / S288c) (Baker's yeast).